The primary structure comprises 371 residues: Methionine import ATP-binding protein MetN (371 aa).

Residues 1-22 (MSEPFMNAPWQPPGDHPALKSP) form a disordered region. One can recognise an ABC transporter domain in the interval 27-268 (ILIDSVRKLY…PRHEVTRRFV (242 aa)). Position 65–72 (65–72 (GRSGAGKS)) interacts with ATP.

The protein belongs to the ABC transporter superfamily. Methionine importer (TC 3.A.1.24) family. The complex is composed of two ATP-binding proteins (MetN), two transmembrane proteins (MetI) and a solute-binding protein (MetQ).

The protein localises to the cell inner membrane. The enzyme catalyses L-methionine(out) + ATP + H2O = L-methionine(in) + ADP + phosphate + H(+). It carries out the reaction D-methionine(out) + ATP + H2O = D-methionine(in) + ADP + phosphate + H(+). Its function is as follows. Part of the ABC transporter complex MetNIQ involved in methionine import. Responsible for energy coupling to the transport system. This Rhodopseudomonas palustris (strain BisB5) protein is Methionine import ATP-binding protein MetN.